The chain runs to 328 residues: Methionine import ATP-binding protein MetN 1 (328 aa).

The 240-residue stretch at 2–241 (ISIERLSKTY…PLSRLGRSLL (240 aa)) folds into the ABC transporter domain. 38–45 (GRSGAGKS) contributes to the ATP binding site.

This sequence belongs to the ABC transporter superfamily. Methionine importer (TC 3.A.1.24) family. As to quaternary structure, the complex is composed of two ATP-binding proteins (MetN), two transmembrane proteins (MetI) and a solute-binding protein (MetQ).

The protein resides in the cell inner membrane. The catalysed reaction is L-methionine(out) + ATP + H2O = L-methionine(in) + ADP + phosphate + H(+). It catalyses the reaction D-methionine(out) + ATP + H2O = D-methionine(in) + ADP + phosphate + H(+). Functionally, part of the ABC transporter complex MetNIQ involved in methionine import. Responsible for energy coupling to the transport system. This chain is Methionine import ATP-binding protein MetN 1, found in Yersinia pestis bv. Antiqua (strain Nepal516).